The sequence spans 101 residues: Protein Tat (101 aa).

Positions 1–24 (MEPVDPNREPWNHPGSQPKTACTN) are interaction with human CREBBP. A transactivation region spans residues 1-48 (MEPVDPNREPWNHPGSQPKTACTNCYCKKCCYHCQVCFLQKGLGISYG). Residues Cys-22, Cys-25, and Cys-27 each coordinate Zn(2+). A cysteine-rich region spans residues 22–37 (CTNCYCKKCCYHCQVC). Lys-28 carries the N6-acetyllysine; by host PCAF modification. 4 residues coordinate Zn(2+): Cys-30, His-33, Cys-34, and Cys-37. The tract at residues 38–48 (FLQKGLGISYG) is core. The disordered stretch occupies residues 48-101 (GRKKRRQRRSAPPGSKTHQDLIPKQPLSQTQRKPTGPEESKKEVESKAEPDRFD). A Nuclear localization signal, RNA-binding (TAR), and protein transduction motif is present at residues 49–57 (RKKRRQRRS). Residues 49–86 (RKKRRQRRSAPPGSKTHQDLIPKQPLSQTQRKPTGPEE) form an interaction with the host capping enzyme RNGTT region. Residues Lys-50 and Lys-51 each carry the N6-acetyllysine; by host EP300 and GCN5L2 modification. 2 positions are modified to asymmetric dimethylarginine; by host PRMT6: Arg-52 and Arg-53. A Glycyl lysine isopeptide (Lys-Gly) (interchain with G-Cter in ubiquitin) cross-link involves residue Lys-71. Basic and acidic residues predominate over residues 82-101 (TGPEESKKEVESKAEPDRFD).

Belongs to the lentiviruses Tat family. Interacts with host CCNT1. Associates with the P-TEFb complex composed at least of Tat, P-TEFb (CDK9 and CCNT1), TAR RNA, RNA Pol II. Recruits the HATs CREBBP, TAF1/TFIID, EP300, PCAF and GCN5L2. Interacts with host KAT5/Tip60; this interaction targets the latter to degradation. Interacts with the host deacetylase SIRT1. Interacts with host capping enzyme RNGTT; this interaction stimulates RNGTT. Binds to host KDR, and to the host integrins ITGAV/ITGB3 and ITGA5/ITGB1. Interacts with host KPNB1/importin beta-1 without previous binding to KPNA1/importin alpha-1. Interacts with EIF2AK2. Interacts with host nucleosome assembly protein NAP1L1; this interaction may be required for the transport of Tat within the nucleus, since the two proteins interact at the nuclear rim. Interacts with host C1QBP/SF2P32; this interaction involves lysine-acetylated Tat. Interacts with the host chemokine receptors CCR2, CCR3 and CXCR4. Interacts with host DPP4/CD26; this interaction may trigger an anti-proliferative effect. Interacts with host LDLR. Interacts with the host extracellular matrix metalloproteinase MMP1. Interacts with host PRMT6; this interaction mediates Tat's methylation. Interacts with, and is ubiquitinated by MDM2/Hdm2. Interacts with host PSMC3 and HTATIP2. Interacts with STAB1; this interaction may overcome SATB1-mediated repression of IL2 and IL2RA (interleukin) in T cells by binding to the same domain than HDAC1. Interacts (when acetylated) with human CDK13, thereby increasing HIV-1 mRNA splicing and promoting the production of the doubly spliced HIV-1 protein Nef. Interacts with host TBP; this interaction modulates the activity of transcriptional pre-initiation complex. Interacts with host RELA. Interacts with host PLSCR1; this interaction negatively regulates Tat transactivation activity by altering its subcellular distribution. In terms of processing, asymmetrical arginine methylation by host PRMT6 seems to diminish the transactivation capacity of Tat and affects the interaction with host CCNT1. Post-translationally, acetylation by EP300, CREBBP, GCN5L2/GCN5 and PCAF regulates the transactivation activity of Tat. EP300-mediated acetylation of Lys-50 promotes dissociation of Tat from the TAR RNA through the competitive binding to PCAF's bromodomain. In addition, the non-acetylated Tat's N-terminus can also interact with PCAF. PCAF-mediated acetylation of Lys-28 enhances Tat's binding to CCNT1. Lys-50 is deacetylated by SIRT1. Polyubiquitination by host MDM2 does not target Tat to degradation, but activates its transactivation function and fosters interaction with CCNT1 and TAR RNA. In terms of processing, phosphorylated by EIF2AK2 on serine and threonine residues adjacent to the basic region important for TAR RNA binding and function. Phosphorylation of Tat by EIF2AK2 is dependent on the prior activation of EIF2AK2 by dsRNA.

Its subcellular location is the host nucleus. It localises to the host nucleolus. The protein resides in the host cytoplasm. The protein localises to the secreted. In terms of biological role, transcriptional activator that increases RNA Pol II processivity, thereby increasing the level of full-length viral transcripts. Recognizes a hairpin structure at the 5'-LTR of the nascent viral mRNAs referred to as the transactivation responsive RNA element (TAR) and recruits the cyclin T1-CDK9 complex (P-TEFb complex) that will in turn hyperphosphorylate the RNA polymerase II to allow efficient elongation. The CDK9 component of P-TEFb and other Tat-activated kinases hyperphosphorylate the C-terminus of RNA Pol II that becomes stabilized and much more processive. Other factors such as HTATSF1/Tat-SF1, SUPT5H/SPT5, and HTATIP2 are also important for Tat's function. Besides its effect on RNA Pol II processivity, Tat induces chromatin remodeling of proviral genes by recruiting the histone acetyltransferases (HATs) CREBBP, EP300 and PCAF to the chromatin. This also contributes to the increase in proviral transcription rate, especially when the provirus integrates in transcriptionally silent region of the host genome. To ensure maximal activation of the LTR, Tat mediates nuclear translocation of NF-kappa-B by interacting with host RELA. Through its interaction with host TBP, Tat may also modulate transcription initiation. Tat can reactivate a latently infected cell by penetrating in it and transactivating its LTR promoter. In the cytoplasm, Tat is thought to act as a translational activator of HIV-1 mRNAs. Extracellular circulating Tat can be endocytosed by surrounding uninfected cells via the binding to several surface receptors such as CD26, CXCR4, heparan sulfate proteoglycans (HSPG) or LDLR. Neurons are rarely infected, but they internalize Tat via their LDLR. Through its interaction with nuclear HATs, Tat is potentially able to control the acetylation-dependent cellular gene expression. Modulates the expression of many cellular genes involved in cell survival, proliferation or in coding for cytokines or cytokine receptors. Tat plays a role in T-cell and neurons apoptosis. Tat induced neurotoxicity and apoptosis probably contribute to neuroAIDS. Circulating Tat also acts as a chemokine-like and/or growth factor-like molecule that binds to specific receptors on the surface of the cells, affecting many cellular pathways. In the vascular system, Tat binds to ITGAV/ITGB3 and ITGA5/ITGB1 integrins dimers at the surface of endothelial cells and competes with bFGF for heparin-binding sites, leading to an excess of soluble bFGF. The polypeptide is Protein Tat (Homo sapiens (Human)).